The chain runs to 158 residues: Transcription elongation factor GreA (158 aa).

Residues 3-75 are a coiled coil; the sequence is TEKTYPMTQE…TQLENMIRNA (73 aa).

The protein belongs to the GreA/GreB family.

Functionally, necessary for efficient RNA polymerase transcription elongation past template-encoded arresting sites. The arresting sites in DNA have the property of trapping a certain fraction of elongating RNA polymerases that pass through, resulting in locked ternary complexes. Cleavage of the nascent transcript by cleavage factors such as GreA or GreB allows the resumption of elongation from the new 3'terminus. GreA releases sequences of 2 to 3 nucleotides. This Bacillus cytotoxicus (strain DSM 22905 / CIP 110041 / 391-98 / NVH 391-98) protein is Transcription elongation factor GreA.